A 317-amino-acid polypeptide reads, in one-letter code: Apolipoprotein E (317 aa).

A signal peptide spans 1-18 (MKVLWAALLVTFLAGCQA). 8 repeat units span residues 80-101 (TLMD…EQLS), 102-123 (PVAE…ARLG), 124-145 (ADME…AMLG), 146-167 (QSTE…KRLL), 168-189 (RDAD…EGAE), 190-211 (RGVS…VRAA), 212-233 (TVGS…ERLR), and 234-255 (ARME…EQVA). The segment at 80–255 (TLMDETMKEL…RLDEVKEQVA (176 aa)) is 8 X 22 AA approximate tandem repeats. At methionine 143 the chain carries Methionine sulfoxide. The residue at position 147 (serine 147) is a Phosphoserine. Residues 158–168 (HLRKLRKRLLR) form an LDL and other lipoprotein receptors binding region. Residue 162–165 (LRKR) coordinates heparin. The lipid-binding and lipoprotein association stretch occupies residues 210–290 (AATVGSLASQ…SWFEPLVEDM (81 aa)). Heparin is bound at residue 229 to 236 (GERLRARM). The interval 266–317 (QQISLQAEAFQARLKSWFEPLVEDMQRQWAGLVEKVQAAVGASTAPVPSDNH) is homooligomerization. The interval 278–290 (RLKSWFEPLVEDM) is specificity for association with VLDL.

This sequence belongs to the apolipoprotein A1/A4/E family. As to quaternary structure, homotetramer. May interact with ABCA1; functionally associated with ABCA1 in the biogenesis of HDLs. May interact with APP/A4 amyloid-beta peptide; the interaction is extremely stable in vitro but its physiological significance is unclear. May interact with MAPT. May interact with MAP2. In the cerebrospinal fluid, interacts with secreted SORL1. Interacts with PMEL; this allows the loading of PMEL luminal fragment on ILVs to induce fibril nucleation. APOE exists as multiple glycosylated and sialylated glycoforms within cells and in plasma. The extent of glycosylation and sialylation are tissue and context specific. In terms of processing, glycated in plasma VLDL. Post-translationally, phosphorylated by FAM20C in the extracellular medium.

The protein resides in the secreted. Its subcellular location is the extracellular space. It localises to the extracellular matrix. It is found in the extracellular vesicle. The protein localises to the endosome. The protein resides in the multivesicular body. In terms of biological role, APOE is an apolipoprotein, a protein associating with lipid particles, that mainly functions in lipoprotein-mediated lipid transport between organs via the plasma and interstitial fluids. APOE is a core component of plasma lipoproteins and is involved in their production, conversion and clearance. Apolipoproteins are amphipathic molecules that interact both with lipids of the lipoprotein particle core and the aqueous environment of the plasma. As such, APOE associates with chylomicrons, chylomicron remnants, very low density lipoproteins (VLDL) and intermediate density lipoproteins (IDL) but shows a preferential binding to high-density lipoproteins (HDL). It also binds a wide range of cellular receptors including the LDL receptor/LDLR, the LDL receptor-related proteins LRP1, LRP2 and LRP8 and the very low-density lipoprotein receptor/VLDLR that mediate the cellular uptake of the APOE-containing lipoprotein particles. Finally, APOE also has a heparin-binding activity and binds heparan-sulfate proteoglycans on the surface of cells, a property that supports the capture and the receptor-mediated uptake of APOE-containing lipoproteins by cells. A main function of APOE is to mediate lipoprotein clearance through the uptake of chylomicrons, VLDLs, and HDLs by hepatocytes. APOE is also involved in the biosynthesis by the liver of VLDLs as well as their uptake by peripheral tissues ensuring the delivery of triglycerides and energy storage in muscle, heart and adipose tissues. By participating in the lipoprotein-mediated distribution of lipids among tissues, APOE plays a critical role in plasma and tissues lipid homeostasis. APOE is also involved in two steps of reverse cholesterol transport, the HDLs-mediated transport of cholesterol from peripheral tissues to the liver, and thereby plays an important role in cholesterol homeostasis. First, it is functionally associated with ABCA1 in the biogenesis of HDLs in tissues. Second, it is enriched in circulating HDLs and mediates their uptake by hepatocytes. APOE also plays an important role in lipid transport in the central nervous system, regulating neuron survival and sprouting. This is Apolipoprotein E (APOE) from Papio anubis (Olive baboon).